We begin with the raw amino-acid sequence, 497 residues long: Protein DETOXIFICATION 25 (497 aa).

Transmembrane regions (helical) follow at residues 43 to 63 (LPST…QAFI), 70 to 90 (GLAA…GIMA), 121 to 141 (IVDT…GPIL), 157 to 177 (IYPW…MQMY), 186 to 206 (IIGI…WWCV), 216 to 236 (ALLG…VYVF), 261 to 281 (LSIS…IIVL), 291 to 311 (IAIS…NICF), 339 to 359 (VVLV…LAFG), 381 to 401 (IVLS…GVAI), 416 to 436 (SYYA…NFGI), and 438 to 458 (GLWS…CYVI).

This sequence belongs to the multi antimicrobial extrusion (MATE) (TC 2.A.66.1) family.

The protein resides in the membrane. The chain is Protein DETOXIFICATION 25 from Arabidopsis thaliana (Mouse-ear cress).